A 480-amino-acid chain; its full sequence is Glutamyl-tRNA(Gln) amidotransferase subunit A (480 aa).

Catalysis depends on charge relay system residues Lys-76 and Ser-151. Ser-175 functions as the Acyl-ester intermediate in the catalytic mechanism.

It belongs to the amidase family. GatA subfamily. Heterotrimer of A, B and C subunits.

The catalysed reaction is L-glutamyl-tRNA(Gln) + L-glutamine + ATP + H2O = L-glutaminyl-tRNA(Gln) + L-glutamate + ADP + phosphate + H(+). Its function is as follows. Allows the formation of correctly charged Gln-tRNA(Gln) through the transamidation of misacylated Glu-tRNA(Gln) in organisms which lack glutaminyl-tRNA synthetase. The reaction takes place in the presence of glutamine and ATP through an activated gamma-phospho-Glu-tRNA(Gln). The chain is Glutamyl-tRNA(Gln) amidotransferase subunit A from Exiguobacterium sibiricum (strain DSM 17290 / CCUG 55495 / CIP 109462 / JCM 13490 / 255-15).